Consider the following 152-residue polypeptide: Large ribosomal subunit protein bL9 (152 aa).

This sequence belongs to the bacterial ribosomal protein bL9 family.

Functionally, binds to the 23S rRNA. The polypeptide is Large ribosomal subunit protein bL9 (Synechococcus sp. (strain CC9902)).